Consider the following 235-residue polypeptide: Phosphoribosylaminoimidazole-succinocarboxamide synthase (235 aa).

This sequence belongs to the SAICAR synthetase family.

The catalysed reaction is 5-amino-1-(5-phospho-D-ribosyl)imidazole-4-carboxylate + L-aspartate + ATP = (2S)-2-[5-amino-1-(5-phospho-beta-D-ribosyl)imidazole-4-carboxamido]succinate + ADP + phosphate + 2 H(+). It participates in purine metabolism; IMP biosynthesis via de novo pathway; 5-amino-1-(5-phospho-D-ribosyl)imidazole-4-carboxamide from 5-amino-1-(5-phospho-D-ribosyl)imidazole-4-carboxylate: step 1/2. This is Phosphoribosylaminoimidazole-succinocarboxamide synthase from Streptococcus thermophilus (strain ATCC BAA-250 / LMG 18311).